A 91-amino-acid chain; its full sequence is MIAKHLILSGRVQGVGFRDWMVTRARRLALAGWVRNRADGTLEALVAGDAPAVEELLRACRRGPPLADVTDIVETFAEPPAEPGFVKRATG.

Residues 3–89 form the Acylphosphatase-like domain; it reads AKHLILSGRV…PAEPGFVKRA (87 aa). Residues Arg-18 and Asn-36 contribute to the active site.

The protein belongs to the acylphosphatase family.

The enzyme catalyses an acyl phosphate + H2O = a carboxylate + phosphate + H(+). In Acidiphilium cryptum (strain JF-5), this protein is Acylphosphatase (acyP).